The sequence spans 304 residues: L-threonate dehydrogenase (304 aa).

NAD(+)-binding positions include Tyr7–Val35 and Thr102. Residue Lys178 is part of the active site. An NAD(+)-binding site is contributed by Lys246.

Belongs to the HIBADH-related family. L-threonate dehydrogenase subfamily.

The enzyme catalyses L-threonate + NAD(+) = 2-dehydro-L-erythronate + NADH + H(+). In terms of biological role, catalyzes oxidation of L-threonate to 2-oxo-tetronate. Can use either NAD(+) or NADP(+) as cosubstrate, with a preference for NAD(+). The chain is L-threonate dehydrogenase from Pectobacterium atrosepticum (strain SCRI 1043 / ATCC BAA-672) (Erwinia carotovora subsp. atroseptica).